The following is a 728-amino-acid chain: Catalase-peroxidase 1 (728 aa).

The signal sequence occupies residues 1–16 (MDKAQHTQGKCPVAHG). The tryptophyl-tyrosyl-methioninium (Trp-Tyr) (with M-251) cross-link spans 97–225 (WHSAGTYRMA…LAAVMMGLIY (129 aa)). His98 serves as the catalytic Proton acceptor. The segment at residues 225–251 (YVNPEGVDGQPDPLKTAQDIRVTFERM) is a cross-link (tryptophyl-tyrosyl-methioninium (Tyr-Met) (with W-97)). His266 serves as a coordination point for heme b.

This sequence belongs to the peroxidase family. Peroxidase/catalase subfamily. Homodimer or homotetramer. Requires heme b as cofactor. Post-translationally, formation of the three residue Trp-Tyr-Met cross-link is important for the catalase, but not the peroxidase activity of the enzyme.

It catalyses the reaction H2O2 + AH2 = A + 2 H2O. The catalysed reaction is 2 H2O2 = O2 + 2 H2O. Functionally, bifunctional enzyme with both catalase and broad-spectrum peroxidase activity. In Shewanella frigidimarina (strain NCIMB 400), this protein is Catalase-peroxidase 1.